Consider the following 86-residue polypeptide: Apolipoprotein C-I (86 aa).

The signal sequence occupies residues 1-26; the sequence is MRLFLSLPVLVVALLMILEGPGPAQG.

The protein belongs to the apolipoprotein C1 family.

Its subcellular location is the secreted. Functionally, inhibitor of lipoprotein binding to the low density lipoprotein (LDL) receptor, LDL receptor-related protein, and very low density lipoprotein (VLDL) receptor. Associates with high density lipoproteins (HDL) and the triacylglycerol-rich lipoproteins in the plasma and makes up about 10% of the protein of the VLDL and 2% of that of HDL. Appears to interfere directly with fatty acid uptake and is also the major plasma inhibitor of cholesteryl ester transfer protein (CETP). Binds free fatty acids and reduces their intracellular esterification. Modulates the interaction of APOE with beta-migrating VLDL and inhibits binding of beta-VLDL to the LDL receptor-related protein. The chain is Apolipoprotein C-I (APOC1) from Aotus nancymaae (Ma's night monkey).